We begin with the raw amino-acid sequence, 757 residues long: MDVNPTLLFLKVPVQNAISTTFPYTGDPPYSHGTGTGYTMDTVNRTHQYSEKGKWTTNTETGAPQLNPIDGPLPEDNEPSGYAQTDCVLEAMAFLEESHPGIFENSCLETMEIVQQTRVDKLTQGRQTYDWTLNRNQPAATALANTIEIFRSNGLTANESGRLIDFLKDVMESMDKEEMEITTHFQRKRRVRDNMTKKMVTQRTIGKKKQRLNKKSYLIRALTLNTMTKDAERGKLKRRAIATPGMQIRGFVYFVETLARSICEKLEQSGLPVGGNEKKAKLANVVRKMMTNSQDTELSFTITGDNTKWNENQNPRMFLAMITYITRNQPEWFRNVLSIAPIMFSNKMARLGKGYMFESKSMKLRTQIPAEMLANIDLKYFNELTKKKIDKIRPLLIDGTASLSPGMMMGMFNMLSTVLGVSILNLGQKRCTKTTYWWDGLQSSDDFALIVNAPNHEGIQAGVDRFYRTCKLVGINMSKKKSYINRTGTFEFTSFFYRYGFVANFSMELPSFGVSGINESADMSIGVTVIKNNMINNDLGPATAQMALQLFIKDYRYTYRCHRGDTQIQTRRSFELKKLWEQTRSKAGLLVSDGGPNLYNIRNLHIPEVCLKWELMDEDYQGRLCNPLNPFVSHKEIESVNNAVVMPAHGPAKSMEYDAVATTHSWIPKRNRSILNTSQRGILEDEQMYQKCCNLFEKFFPSSSYRRPVGISSMVEAMVSRARIDARIDFESGRIKKEEFAEIMKICSTIEELRRQK.

Residues 52–82 (KGKWTTNTETGAPQLNPIDGPLPEDNEPSGY) form a disordered region. A compositionally biased stretch (polar residues) spans 55-64 (WTTNTETGAP). Short sequence motifs (nuclear localization signal) lie at residues 187-195 (RKRRVRDNM) and 203-216 (RTIG…NKKS). The tract at residues 249-256 (RGFVYFVE) is promoter-binding site. In terms of domain architecture, RdRp catalytic spans 286 to 483 (VRKMMTNSQD…GINMSKKKSY (198 aa)).

The protein belongs to the influenza viruses polymerase PB1 family. Influenza RNA polymerase is composed of three subunits: PB1, PB2 and PA. Interacts (via N-terminus) with PA (via C-terminus). Interacts (via C-terminus) with PB2 (via N-terminus); this interaction is essential for transcription initiation. In terms of processing, phosphorylated by host PRKCA.

It localises to the host nucleus. The protein resides in the host cytoplasm. The catalysed reaction is RNA(n) + a ribonucleoside 5'-triphosphate = RNA(n+1) + diphosphate. Its function is as follows. RNA-dependent RNA polymerase which is responsible for replication and transcription of virus RNA segments. The transcription of viral mRNAs occurs by a unique mechanism called cap-snatching. 5' methylated caps of cellular mRNAs are cleaved after 10-13 nucleotides by PA. In turn, these short capped RNAs are used as primers by PB1 for transcription of viral mRNAs. During virus replication, PB1 initiates RNA synthesis and copy vRNA into complementary RNA (cRNA) which in turn serves as a template for the production of more vRNAs. The sequence is that of RNA-directed RNA polymerase catalytic subunit from Aves (Cat).